We begin with the raw amino-acid sequence, 158 residues long: Non-secretory ribonuclease (158 aa).

An N-terminal signal peptide occupies residues 1 to 27 (MVPKLFTSQICLLPLLGLLSAEGSPHA). Residue His42 is the Proton acceptor of the active site. At Tyr60 the chain carries 3'-nitrotyrosine. Residue 65–69 (KNKNT) participates in substrate binding. N-linked (GlcNAc...) asparagine glycosylation is found at Asn86, Asn92, and Asn111. Catalysis depends on His153, which acts as the Proton donor.

Belongs to the pancreatic ribonuclease family. As to quaternary structure, interacts with and forms a tight 1:1 complex with RNH1. Dimerization of two such complexes may occur.

Its subcellular location is the lysosome. It is found in the cytoplasmic granule. The catalysed reaction is an [RNA] containing cytidine + H2O = an [RNA]-3'-cytidine-3'-phosphate + a 5'-hydroxy-ribonucleotide-3'-[RNA].. It catalyses the reaction an [RNA] containing uridine + H2O = an [RNA]-3'-uridine-3'-phosphate + a 5'-hydroxy-ribonucleotide-3'-[RNA].. This is a non-secretory ribonuclease. It is a pyrimidine specific nuclease with a slight preference for U. Cytotoxin and helminthotoxin. Possesses a wide variety of biological activities. The chain is Non-secretory ribonuclease (RNASE2) from Callithrix jacchus (White-tufted-ear marmoset).